A 333-amino-acid chain; its full sequence is Ketol-acid reductoisomerase (NADP(+)) (333 aa).

The KARI N-terminal Rossmann domain maps to 2–182 (ANIYYDSDCD…GGGRAGILET (181 aa)). Residues 25-28 (YGSQ), Lys48, Ser51, Ser53, and 83-86 (DTIQ) each bind NADP(+). Residue His108 is part of the active site. Gly134 lines the NADP(+) pocket. Residues 183–331 (SFREETETDL…KKLRSMMKWL (149 aa)) form the KARI C-terminal knotted domain. Mg(2+) is bound by residues Asp191, Glu195, Glu227, and Glu231. Residue Ser252 coordinates substrate.

The protein belongs to the ketol-acid reductoisomerase family. Mg(2+) serves as cofactor.

The catalysed reaction is (2R)-2,3-dihydroxy-3-methylbutanoate + NADP(+) = (2S)-2-acetolactate + NADPH + H(+). The enzyme catalyses (2R,3R)-2,3-dihydroxy-3-methylpentanoate + NADP(+) = (S)-2-ethyl-2-hydroxy-3-oxobutanoate + NADPH + H(+). Its pathway is amino-acid biosynthesis; L-isoleucine biosynthesis; L-isoleucine from 2-oxobutanoate: step 2/4. It participates in amino-acid biosynthesis; L-valine biosynthesis; L-valine from pyruvate: step 2/4. Involved in the biosynthesis of branched-chain amino acids (BCAA). Catalyzes an alkyl-migration followed by a ketol-acid reduction of (S)-2-acetolactate (S2AL) to yield (R)-2,3-dihydroxy-isovalerate. In the isomerase reaction, S2AL is rearranged via a Mg-dependent methyl migration to produce 3-hydroxy-3-methyl-2-ketobutyrate (HMKB). In the reductase reaction, this 2-ketoacid undergoes a metal-dependent reduction by NADPH to yield (R)-2,3-dihydroxy-isovalerate. The sequence is that of Ketol-acid reductoisomerase (NADP(+)) from Leptospira interrogans serogroup Icterohaemorrhagiae serovar copenhageni (strain Fiocruz L1-130).